The primary structure comprises 928 residues: MYCBP-associated protein (928 aa).

Disordered regions lie at residues 1–38 (MKKA…PVSN) and 164–183 (EEPK…APPL). A compositionally biased stretch (basic and acidic residues) spans 164-177 (EEPKPKSPKEEKRP). Residue Ser557 is modified to Phosphoserine. Phosphothreonine is present on Thr558. Residue Ser564 is modified to Phosphoserine. The tract at residues 786–881 (IPDEGQKSPP…SSATSQEPID (96 aa)) is disordered. Residues 806-865 (LGKEDRRGGAQEKKQLSARDKEEKKGSKTPSKEDRLNSKKQKAKDDKKVVKSTSRDRLLS) show a composition bias toward basic and acidic residues.

In terms of assembly, interacts with MYCBP. As to expression, expressed in brain, retina, testis, heart and lung. Not detected in liver, kidney or intestine. In brain, highly abundant in CNS neurons of the hippocampus and cerebellum. Strongly expressed in cochlea and vestibular sensory epithelia. In both the organ of Corti and the vestibular organ, expression is restricted to hair cells.

The protein localises to the cytoplasm. It is found in the membrane. Its function is as follows. May play a role in spermatogenesis. May be involved in synaptic processes. The sequence is that of MYCBP-associated protein from Rattus norvegicus (Rat).